A 200-amino-acid polypeptide reads, in one-letter code: Small ribosomal subunit protein uS4 (200 aa).

The interval 22–43 is disordered; the sequence is TGKELERRPYAPGQHGPTQRKK. The 79-residue stretch at 92–170 folds into the S4 RNA-binding domain; sequence QRLDNIVYRL…VPEYVTFDAE (79 aa).

This sequence belongs to the universal ribosomal protein uS4 family. Part of the 30S ribosomal subunit. Contacts protein S5. The interaction surface between S4 and S5 is involved in control of translational fidelity.

One of the primary rRNA binding proteins, it binds directly to 16S rRNA where it nucleates assembly of the body of the 30S subunit. Functionally, with S5 and S12 plays an important role in translational accuracy. The sequence is that of Small ribosomal subunit protein uS4 from Listeria welshimeri serovar 6b (strain ATCC 35897 / DSM 20650 / CCUG 15529 / CIP 8149 / NCTC 11857 / SLCC 5334 / V8).